Here is a 272-residue protein sequence, read N- to C-terminus: D-aminoacyl-tRNA deacylase (272 aa).

This sequence belongs to the DtdA deacylase family. In terms of assembly, monomer. Zn(2+) is required as a cofactor.

The catalysed reaction is a D-aminoacyl-tRNA + H2O = a tRNA + a D-alpha-amino acid + H(+). It catalyses the reaction glycyl-tRNA(Ala) + H2O = tRNA(Ala) + glycine + H(+). D-aminoacyl-tRNA deacylase with broad substrate specificity. By recycling D-aminoacyl-tRNA to D-amino acids and free tRNA molecules, this enzyme counteracts the toxicity associated with the formation of D-aminoacyl-tRNA entities in vivo. This is D-aminoacyl-tRNA deacylase from Desulfurococcus amylolyticus (strain DSM 18924 / JCM 16383 / VKM B-2413 / 1221n) (Desulfurococcus kamchatkensis).